Consider the following 286-residue polypeptide: ATP synthase gamma chain (286 aa).

The protein belongs to the ATPase gamma chain family. As to quaternary structure, F-type ATPases have 2 components, CF(1) - the catalytic core - and CF(0) - the membrane proton channel. CF(1) has five subunits: alpha(3), beta(3), gamma(1), delta(1), epsilon(1). CF(0) has three main subunits: a, b and c.

It is found in the cell membrane. In terms of biological role, produces ATP from ADP in the presence of a proton gradient across the membrane. The gamma chain is believed to be important in regulating ATPase activity and the flow of protons through the CF(0) complex. This chain is ATP synthase gamma chain, found in Ureaplasma parvum serovar 3 (strain ATCC 27815 / 27 / NCTC 11736).